Reading from the N-terminus, the 211-residue chain is ATP-dependent Clp protease proteolytic subunit (211 aa).

The active-site Nucleophile is Ser107. The active site involves His132.

This sequence belongs to the peptidase S14 family. As to quaternary structure, fourteen ClpP subunits assemble into 2 heptameric rings which stack back to back to give a disk-like structure with a central cavity, resembling the structure of eukaryotic proteasomes.

The protein localises to the cytoplasm. It catalyses the reaction Hydrolysis of proteins to small peptides in the presence of ATP and magnesium. alpha-casein is the usual test substrate. In the absence of ATP, only oligopeptides shorter than five residues are hydrolyzed (such as succinyl-Leu-Tyr-|-NHMec, and Leu-Tyr-Leu-|-Tyr-Trp, in which cleavage of the -Tyr-|-Leu- and -Tyr-|-Trp bonds also occurs).. Functionally, cleaves peptides in various proteins in a process that requires ATP hydrolysis. Has a chymotrypsin-like activity. Plays a major role in the degradation of misfolded proteins. The polypeptide is ATP-dependent Clp protease proteolytic subunit (Xanthobacter autotrophicus (strain ATCC BAA-1158 / Py2)).